Here is a 79-residue protein sequence, read N- to C-terminus: UPF0154 protein llmg_1186 (79 aa).

Residues 4–24 form a helical membrane-spanning segment; it reads ILAILLMVVCLLAGFFLGTWF.

It belongs to the UPF0154 family.

Its subcellular location is the cell membrane. The polypeptide is UPF0154 protein llmg_1186 (Lactococcus lactis subsp. cremoris (strain MG1363)).